The following is a 353-amino-acid chain: Biotin synthase (353 aa).

Over residues 1–22 (MTACSTTPTTSATSAQPAAGSP) the composition is skewed to low complexity. The disordered stretch occupies residues 1–30 (MTACSTTPTTSATSAQPAAGSPLQWHARPS). The Radical SAM core domain maps to 72 to 299 (GDIELATLLS…TARVRLSAGR (228 aa)). Residues C87, C91, and C94 each contribute to the [4Fe-4S] cluster site. [2Fe-2S] cluster contacts are provided by C131, C162, C222, and R294.

Belongs to the radical SAM superfamily. Biotin synthase family. As to quaternary structure, homodimer. The cofactor is [4Fe-4S] cluster. Requires [2Fe-2S] cluster as cofactor.

It catalyses the reaction (4R,5S)-dethiobiotin + (sulfur carrier)-SH + 2 reduced [2Fe-2S]-[ferredoxin] + 2 S-adenosyl-L-methionine = (sulfur carrier)-H + biotin + 2 5'-deoxyadenosine + 2 L-methionine + 2 oxidized [2Fe-2S]-[ferredoxin]. Its pathway is cofactor biosynthesis; biotin biosynthesis; biotin from 7,8-diaminononanoate: step 2/2. Functionally, catalyzes the conversion of dethiobiotin (DTB) to biotin by the insertion of a sulfur atom into dethiobiotin via a radical-based mechanism. In Delftia acidovorans (strain DSM 14801 / SPH-1), this protein is Biotin synthase.